The following is a 125-amino-acid chain: Small ribosomal subunit protein eS8 (125 aa).

Positions 1 to 20 (MLWQGESIRKVTGGRRRPAQ) are disordered.

Belongs to the eukaryotic ribosomal protein eS8 family. Part of the 30S ribosomal subunit.

The polypeptide is Small ribosomal subunit protein eS8 (Methanoregula boonei (strain DSM 21154 / JCM 14090 / 6A8)).